Here is a 400-residue protein sequence, read N- to C-terminus: NADPH dehydrogenase 2 (400 aa).

Thr-38 and Gln-115 together coordinate FMN. His-192 and Asn-195 together coordinate substrate. Tyr-197 acts as the Proton donor in catalysis. FMN is bound by residues Arg-244 and Arg-349. Ser-353 is subject to Phosphoserine. Residue Tyr-376 coordinates substrate. At Ser-379 the chain carries Phosphoserine.

The protein belongs to the NADH:flavin oxidoreductase/NADH oxidase family. Homodimer or heterodimer with OYE3. FMN serves as cofactor.

The protein resides in the cytoplasm. It is found in the nucleus. The protein localises to the mitochondrion. It carries out the reaction A + NADPH + H(+) = AH2 + NADP(+). Functionally, flavin-dependent enoate reductase that catalyzes the chemo- and stereoslective hydrogenation of electron-poor alkenes. The enzyme is reduced by NADPH, and oxygen, quinones, and alpha,beta-unsaturated aldehydes and ketones can act as electron acceptors to complete catalytic turnover. The physiological oxidant remains elusive. Has an antioxidant activity, reducing reactive oxygen species (ROS) levels when overexpressed. Formation of OYE2-OYE3 heterodimers contribute to the induction of programmed cell death upon oxidative stress. This chain is NADPH dehydrogenase 2, found in Saccharomyces cerevisiae (strain ATCC 204508 / S288c) (Baker's yeast).